A 177-amino-acid chain; its full sequence is Large ribosomal subunit protein uL6 (177 aa).

Belongs to the universal ribosomal protein uL6 family. Part of the 50S ribosomal subunit.

Functionally, this protein binds to the 23S rRNA, and is important in its secondary structure. It is located near the subunit interface in the base of the L7/L12 stalk, and near the tRNA binding site of the peptidyltransferase center. The chain is Large ribosomal subunit protein uL6 from Pseudomonas putida (strain W619).